Consider the following 470-residue polypeptide: Neuraminidase (470 aa).

Over Met1–Ser14 the chain is Intravirion. The involved in apical transport and lipid raft association stretch occupies residues Gly11–Thr32. The helical transmembrane segment at Leu15 to Val35 threads the bilayer. The hypervariable stalk region stretch occupies residues Thr32–Thr86. Residues Leu36–Met470 lie on the Virion surface side of the membrane. N-linked (GlcNAc...) asparagine; by host glycans are attached at residues Asn46, Asn54, and Asn84. The head of neuraminidase stretch occupies residues Leu89 to Met470. 8 cysteine pairs are disulfide-bonded: Cys90/Cys417, Cys122/Cys127, Cys182/Cys229, Cys231/Cys236, Cys277/Cys290, Cys279/Cys288, Cys316/Cys335, and Cys421/Cys446. Arg116 serves as a coordination point for substrate. Asn144 is a glycosylation site (N-linked (GlcNAc...) asparagine; by host). The Proton donor/acceptor role is filled by Asp149. Arg150 is a substrate binding site. Glu275–Glu276 is a substrate binding site. Arg291 contributes to the substrate binding site. Asp292 serves as a coordination point for Ca(2+). A glycan (N-linked (GlcNAc...) asparagine; by host) is linked at Asn293. Ca(2+) is bound at residue Gly296. The N-linked (GlcNAc...) asparagine; by host glycan is linked to Asn307. Asp322 is a Ca(2+) binding site. Arg368 is a substrate binding site. The N-linked (GlcNAc...) asparagine; by host glycan is linked to Asn398. Catalysis depends on Tyr402, which acts as the Nucleophile. Asn454 carries an N-linked (GlcNAc...) asparagine; by host glycan.

It belongs to the glycosyl hydrolase 34 family. In terms of assembly, homotetramer. Ca(2+) serves as cofactor. Post-translationally, N-glycosylated.

It localises to the virion membrane. The protein resides in the host apical cell membrane. It carries out the reaction Hydrolysis of alpha-(2-&gt;3)-, alpha-(2-&gt;6)-, alpha-(2-&gt;8)- glycosidic linkages of terminal sialic acid residues in oligosaccharides, glycoproteins, glycolipids, colominic acid and synthetic substrates.. Its activity is regulated as follows. Inhibited by the neuraminidase inhibitors zanamivir (Relenza) and oseltamivir (Tamiflu). These drugs interfere with the release of progeny virus from infected cells and are effective against all influenza strains. Resistance to neuraminidase inhibitors is quite rare. Functionally, catalyzes the removal of terminal sialic acid residues from viral and cellular glycoconjugates. Cleaves off the terminal sialic acids on the glycosylated HA during virus budding to facilitate virus release. Additionally helps virus spread through the circulation by further removing sialic acids from the cell surface. These cleavages prevent self-aggregation and ensure the efficient spread of the progeny virus from cell to cell. Otherwise, infection would be limited to one round of replication. Described as a receptor-destroying enzyme because it cleaves a terminal sialic acid from the cellular receptors. May facilitate viral invasion of the upper airways by cleaving the sialic acid moieties on the mucin of the airway epithelial cells. Likely to plays a role in the budding process through its association with lipid rafts during intracellular transport. May additionally display a raft-association independent effect on budding. Plays a role in the determination of host range restriction on replication and virulence. Sialidase activity in late endosome/lysosome traffic seems to enhance virus replication. The protein is Neuraminidase of Aves (Horse).